A 560-amino-acid polypeptide reads, in one-letter code: 5'-nucleotidase (560 aa).

The first 21 residues, 1–21, serve as a signal peptide directing secretion; sequence MNQRLIIKTALSAAILASLAG. A lipid anchor (N-palmitoyl cysteine) is attached at cysteine 22. Cysteine 22 carries the S-diacylglycerol cysteine lipid modification. A divalent metal cation is bound by residues aspartate 45, histidine 47, aspartate 88, asparagine 120, histidine 221, histidine 256, and glutamine 258. Substrate is bound by residues phenylalanine 432 and 501-507; that span reads YNASGGD.

This sequence belongs to the 5'-nucleotidase family. Chloride is required as a cofactor. Requires Mg(2+) as cofactor.

The protein localises to the cell outer membrane. The enzyme catalyses a ribonucleoside 5'-phosphate + H2O = a ribonucleoside + phosphate. Functionally, degradation of extracellular 5'-nucleotides for nutritional needs. This chain is 5'-nucleotidase (nutA), found in Vibrio parahaemolyticus serotype O3:K6 (strain RIMD 2210633).